The sequence spans 1755 residues: Transposon Ty1-DR1 Gag-Pol polyprotein (1755 aa).

3 stretches are compositionally biased toward polar residues: residues 1-10 (MESQQLSNYP), 48-60 (TKAN…TPAS), and 127-152 (QSQF…GNTF). Disordered stretches follow at residues 1 to 93 (MESQ…MMTQ), 126 to 173 (PQSQ…RPPP), and 352 to 421 (GSRN…SKST). Residues 153–165 (TDSSSADSDMTST) show a composition bias toward low complexity. Residues 299-401 (NNGIHINNKV…NSKSKTARAH (103 aa)) are RNA-binding. Low complexity predominate over residues 402–418 (NVSTSNNSPSTDNDSIS). Phosphoserine is present on Ser416. Catalysis depends on Asp461, which acts as the For protease activity; shared with dimeric partner. The interval 583–640 (NVHTSESTRKYPYPFIHRMLAHANAQTIRYSLKNNTITYFNESDVDWSSAIDYQCPDC) is integrase-type zinc finger-like. The Integrase catalytic domain occupies 660 to 835 (NSYEPFQYLH…AGLDISTLLP (176 aa)). Residues Asp671 and Asp736 each coordinate Mg(2+). Disordered regions lie at residues 956–1087 (SKAV…ETEK), 1092–1111 (RSPS…NIVP), and 1130–1187 (DLPL…DNET). The segment covering 960 to 969 (SPTDSTPPST) has biased composition (low complexity). A compositionally biased stretch (polar residues) spans 1005–1015 (STPQISNIEST). Residues 1038 to 1053 (ESSHASKSKDFRHSDS) are compositionally biased toward basic and acidic residues. Composition is skewed to polar residues over residues 1054 to 1082 (YSEN…QISD) and 1101 to 1111 (PENNSSHNIVP). Residues 1178–1212 (KKRSLEDNETEIKVSRDTWNTKNMRSLEPPRSKKR) carry the Bipartite nuclear localization signal motif. Positions 1338–1476 (NNYYITQLDI…DILGLEIKYQ (139 aa)) constitute a Reverse transcriptase Ty1/copia-type domain. Asp1346, Asp1427, Asp1428, Asp1610, Glu1652, and Asp1685 together coordinate Mg(2+). In terms of domain architecture, RNase H Ty1/copia-type spans 1610–1752 (DASYGNQPYY…IKTFKLLTNK (143 aa)).

As to quaternary structure, the capsid protein forms a homotrimer, from which the VLPs are assembled. The protease is a homodimer, whose active site consists of two apposed aspartic acid residues. In terms of processing, initially, virus-like particles (VLPs) are composed of the structural unprocessed proteins Gag and Gag-Pol, and also contain the host initiator methionine tRNA (tRNA(i)-Met) which serves as a primer for minus-strand DNA synthesis, and a dimer of genomic Ty RNA. Processing of the polyproteins occurs within the particle and proceeds by an ordered pathway, called maturation. First, the protease (PR) is released by autocatalytic cleavage of the Gag-Pol polyprotein yielding capsid protein p45 and a Pol-p154 precursor protein. This cleavage is a prerequisite for subsequent processing of Pol-p154 at the remaining sites to release the mature structural and catalytic proteins. Maturation takes place prior to the RT reaction and is required to produce transposition-competent VLPs.

Its subcellular location is the cytoplasm. It localises to the nucleus. The catalysed reaction is DNA(n) + a 2'-deoxyribonucleoside 5'-triphosphate = DNA(n+1) + diphosphate. It catalyses the reaction Endonucleolytic cleavage to 5'-phosphomonoester.. Functionally, capsid protein (CA) is the structural component of the virus-like particle (VLP), forming the shell that encapsulates the retrotransposons dimeric RNA genome. The particles are assembled from trimer-clustered units and there are holes in the capsid shells that allow for the diffusion of macromolecules. CA also has nucleocapsid-like chaperone activity, promoting primer tRNA(i)-Met annealing to the multipartite primer-binding site (PBS), dimerization of Ty1 RNA and initiation of reverse transcription. In terms of biological role, the aspartyl protease (PR) mediates the proteolytic cleavages of the Gag and Gag-Pol polyproteins after assembly of the VLP. Its function is as follows. Reverse transcriptase/ribonuclease H (RT) is a multifunctional enzyme that catalyzes the conversion of the retro-elements RNA genome into dsDNA within the VLP. The enzyme displays a DNA polymerase activity that can copy either DNA or RNA templates, and a ribonuclease H (RNase H) activity that cleaves the RNA strand of RNA-DNA heteroduplexes during plus-strand synthesis and hydrolyzes RNA primers. The conversion leads to a linear dsDNA copy of the retrotransposon that includes long terminal repeats (LTRs) at both ends. Integrase (IN) targets the VLP to the nucleus, where a subparticle preintegration complex (PIC) containing at least integrase and the newly synthesized dsDNA copy of the retrotransposon must transit the nuclear membrane. Once in the nucleus, integrase performs the integration of the dsDNA into the host genome. The sequence is that of Transposon Ty1-DR1 Gag-Pol polyprotein (TY1B-DR1) from Saccharomyces cerevisiae (strain ATCC 204508 / S288c) (Baker's yeast).